A 578-amino-acid polypeptide reads, in one-letter code: SCARECROW-LIKE protein 7 (578 aa).

Residues 18–29 (VIQQQQQQQQQQ) show a composition bias toward low complexity. 2 disordered regions span residues 18–84 (VIQQ…LAYG) and 146–173 (PPPP…APRP). Over residues 49-61 (PHHHQQKHHHHHQ) the composition is skewed to basic residues. The span at 62–74 (QMPAMPQAPPSSH) shows a compositional bias: low complexity. Pro residues predominate over residues 146–156 (PPPPVPSPPPT). Positions 157-173 (HAAATATATAATAAPRP) are enriched in low complexity. Positions 198–578 (SADASCSAPI…RPLLTVSAWR (381 aa)) constitute a GRAS domain. Positions 205 to 264 (APILQSLLSCSRAAATDPGLAAAELASVRAAATDAGDPSERLAFYFADALSRRLACGTGA) are leucine repeat I (LRI). Residues 283-349 (YKTLNDACPY…GKPTRIRITG (67 aa)) form a VHIID region. The short motif at 314–318 (IHIVD) is the VHIID element. Residues 365 to 397 (ATNTRLRDFAKLLGVDFEFVPLLRPVHELNKSD) form a leucine repeat II (LRII) region. The interval 406–497 (VAVNFMLQLY…RWMFGERIQR (92 aa)) is PFYRE. The LXXLL motif motif lies at 414 to 418 (LYHLL). The tract at residues 500–578 (GPEEGADRTE…RPLLTVSAWR (79 aa)) is SAW.

Belongs to the GRAS family. Homodimer.

Its subcellular location is the nucleus. Probable transcription factor involved in plant development. Involved in environmental abiotic stress resistance. May increase the expression of stress-responsive genes. Binds DNA in vitro. The sequence is that of SCARECROW-LIKE protein 7 from Oryza sativa subsp. japonica (Rice).